Consider the following 104-residue polypeptide: Large ribosomal subunit protein uL24 (104 aa).

This sequence belongs to the universal ribosomal protein uL24 family. Part of the 50S ribosomal subunit.

Functionally, one of two assembly initiator proteins, it binds directly to the 5'-end of the 23S rRNA, where it nucleates assembly of the 50S subunit. Its function is as follows. One of the proteins that surrounds the polypeptide exit tunnel on the outside of the subunit. The polypeptide is Large ribosomal subunit protein uL24 (Flavobacterium psychrophilum (strain ATCC 49511 / DSM 21280 / CIP 103535 / JIP02/86)).